The chain runs to 140 residues: Putative pre-16S rRNA nuclease (140 aa).

The protein belongs to the YqgF nuclease family.

It is found in the cytoplasm. Its function is as follows. Could be a nuclease involved in processing of the 5'-end of pre-16S rRNA. The protein is Putative pre-16S rRNA nuclease of Mannheimia succiniciproducens (strain KCTC 0769BP / MBEL55E).